A 591-amino-acid polypeptide reads, in one-letter code: Probable auxin efflux carrier component 3b (591 aa).

At 1 to 6 (MISWHE) the chain is on the extracellular side. A helical transmembrane segment spans residues 7–27 (LYMVLSAVVPLYVAMMVAYGS). At 28-38 (VRWWGVLTPEQ) the chain is on the cytoplasmic side. The helical transmembrane segment at 39 to 59 (CSGINRFVAVIAVPLLSFHFI) threads the bilayer. A (indol-3-yl)acetate-binding site is contributed by Val-51. Residues 60-70 (SSSDPYAMNLR) lie on the Extracellular side of the membrane. Residues 71–93 (FVAADTLQKVLVLAALAAWSRFP) form a helical membrane-spanning segment. The Cytoplasmic segment spans residues 94–107 (ARFVPPAWPPLDCS). A helical membrane pass occupies residues 108 to 128 (ITLFSVSTLPNTLVMGIPLLV). The (indol-3-yl)acetate site is built by Asn-118 and Leu-120. At 129-137 (SMYGPYSGD) the chain is on the extracellular side. The helical transmembrane segment at 138-158 (LMVQIVVLQSIVWYTLLLFLF) threads the bilayer. Residue Tyr-151 participates in (indol-3-yl)acetate binding. At 159–450 (EFRAARVLIA…LIRNPNTYAS (292 aa)) the chain is on the cytoplasmic side. Polar residues-rich tracts occupy residues 243–254 (SRNATPRGSTFT) and 283–292 (SSSRQHTPRP). Disordered regions lie at residues 243-269 (SRNA…SALR), 283-313 (SSSR…APTN), 344-374 (ETRR…GERA), and 392-420 (AGAK…RARG). A compositionally biased stretch (low complexity) spans 395–407 (KTEQQTTAVTTTT). A helical membrane pass occupies residues 451–471 (LIGLTWSLIAFRFHITMPIIV). The Extracellular portion of the chain corresponds to 472–474 (AKS). A helical transmembrane segment spans residues 475–495 (ISILSDAGLGMAMFSLGLFMA). The Cytoplasmic segment spans residues 496 to 511 (TQPKIIACGYSVAAAS). The chain crosses the membrane as a helical span at residues 512–532 (MGVRFFFGPAIMAAASAAVGI). Topologically, residues 533 to 535 (RGT) are extracellular. The chain crosses the membrane as a helical span at residues 536 to 556 (LLRIAIVQAALPQGIVPFVFA). The (indol-3-yl)acetate site is built by Ile-550 and Val-551. At 557 to 568 (KEYNLHATILCT) the chain is on the cytoplasmic side. Residues 569–589 (LVIFGMLIALPITLVYYIILG) traverse the membrane as a helical segment. Topologically, residues 590–591 (LL) are extracellular.

It belongs to the auxin efflux carrier (TC 2.A.69.1) family. As to quaternary structure, homodimer. In terms of tissue distribution, expressed in stem bases and leaves.

The protein localises to the membrane. Functionally, may act as a component of the auxin efflux carrier. The sequence is that of Probable auxin efflux carrier component 3b from Oryza sativa subsp. japonica (Rice).